A 392-amino-acid chain; its full sequence is O-phospho-L-seryl-tRNA:Cys-tRNA synthase 1 (392 aa).

Residues 85-86 (AR), asparagine 190, and 213-215 (SGH) each bind pyridoxal 5'-phosphate. An N6-(pyridoxal phosphate)lysine modification is found at lysine 216.

This sequence belongs to the SepCysS family. As to quaternary structure, homodimer. Interacts with SepRS. The cofactor is pyridoxal 5'-phosphate.

The catalysed reaction is O-phospho-L-seryl-tRNA(Cys) + hydrogen sulfide + H(+) = L-cysteinyl-tRNA(Cys) + phosphate. Converts O-phospho-L-seryl-tRNA(Cys) (Sep-tRNA(Cys)) to L-cysteinyl-tRNA(Cys) (Cys-tRNA(Cys)). This Methanocorpusculum labreanum (strain ATCC 43576 / DSM 4855 / Z) protein is O-phospho-L-seryl-tRNA:Cys-tRNA synthase 1.